Reading from the N-terminus, the 322-residue chain is Arginase-1 (322 aa).

Residues 1–12 (MSSKSKSIGIIG) are compositionally biased toward low complexity. Residues 1-26 (MSSKSKSIGIIGAPFSKGQPRGGVEE) form a disordered region. Serine 7 carries the phosphoserine modification. An N6-succinyllysine modification is found at lysine 17. The residue at position 62 (serine 62) is a Phosphoserine. Positions 101, 124, 126, and 128 each coordinate Mn(2+). Substrate contacts are provided by residues 126 to 130 (HTDIN) and 137 to 139 (SGN). A Phosphoserine modification is found at serine 163. Residue aspartate 183 participates in substrate binding. Mn(2+) contacts are provided by aspartate 232 and aspartate 234. Substrate is bound by residues threonine 246 and glutamate 277.

The protein belongs to the arginase family. In terms of assembly, homotrimer. Interacts with CMTM6. Requires Mn(2+) as cofactor.

Its subcellular location is the cytoplasm. The enzyme catalyses L-arginine + H2O = urea + L-ornithine. It functions in the pathway nitrogen metabolism; urea cycle; L-ornithine and urea from L-arginine: step 1/1. The sequence is that of Arginase-1 (ARG1) from Oryctolagus cuniculus (Rabbit).